The chain runs to 289 residues: Mas-related G-protein coupled receptor member G (289 aa).

The Extracellular segment spans residues Met1 to Ser13. The helical transmembrane segment at Val14–Leu34 threads the bilayer. Residues Trp35–Lys42 are Cytoplasmic-facing. A helical membrane pass occupies residues Lys43–Cys63. Residues Arg64–Asp78 lie on the Extracellular side of the membrane. A helical transmembrane segment spans residues Thr79–Phe99. Residues Ser100–His120 lie on the Cytoplasmic side of the membrane. Residues Ala121 to Ala141 traverse the membrane as a helical segment. Over Asn142–Ser163 the chain is Extracellular. The helical transmembrane segment at Val164–Trp184 threads the bilayer. Residues Val185–Arg195 are Cytoplasmic-facing. A helical membrane pass occupies residues Leu196–Phe216. Over Tyr217–Gln221 the chain is Extracellular. Residues Pro222–Asn242 form a helical membrane-spanning segment. Residues Ser243 to Leu289 are Cytoplasmic-facing.

It belongs to the G-protein coupled receptor 1 family. Mas subfamily.

Its subcellular location is the cell membrane. Orphan receptor. May regulate nociceptor function and/or development, including the sensation or modulation of pain. The sequence is that of Mas-related G-protein coupled receptor member G (MRGPRG) from Homo sapiens (Human).